The primary structure comprises 1345 residues: Protein dispatched homolog 2 (1345 aa).

Positions 1-28 (MAPEASPERSCSLHTCPLEDPTGAPVPP) are disordered. A helical transmembrane segment spans residues 125–145 (VAVIVGCLAFIFLCTLAGLLG). 2 N-linked (GlcNAc...) asparagine glycosylation sites follow: Asn304 and Asn420. The 170-residue stretch at 429 to 598 (LGLKPRLLKY…LLWLPATVVL (170 aa)) folds into the SSD domain. Transmembrane regions (helical) follow at residues 440–460 (LAED…GMSL), 465–485 (LFIT…AYFL), 497–517 (FVNL…TLIF), 544–564 (FGYL…GSYL), 572–592 (CFAL…LLWL), and 659–679 (YIWI…GGVS). Asn776 carries N-linked (GlcNAc...) asparagine glycosylation. 5 helical membrane-spanning segments follow: residues 919 to 939 (PAVV…LSTW), 945 to 965 (LFSV…LVLL), 974 to 994 (ALFL…YCIS), 1019 to 1039 (AMTT…TILL), and 1043 to 1063 (LGII…FFFQ). Disordered regions lie at residues 1251–1271 (VRVP…GHPI) and 1295–1345 (PNMP…GYSS). The segment covering 1297–1306 (MPNSHHSSLS) has biased composition (polar residues). Arg1310 is modified (omega-N-methylarginine).

It belongs to the dispatched family.

Its subcellular location is the membrane. The chain is Protein dispatched homolog 2 (Disp2) from Mus musculus (Mouse).